A 271-amino-acid chain; its full sequence is WUSCHEL-related homeobox 6 (271 aa).

The segment at residues Ala-57–Arg-121 is a DNA-binding region (homeobox; WUS-type). Positions Arg-118–Glu-195 are disordered. Basic and acidic residues-rich tracts occupy residues Pro-132 to Gln-148 and Asn-180 to Glu-195.

Belongs to the WUS homeobox family. Highly expressed in developing ovules. Present in developing primordia and differentiating organs but absent in mature organs.

It is found in the nucleus. Its function is as follows. Transcription factor that plays a central role in ovule patterning by regulating cell proliferation of the maternal integuments and differentiation of the maegaspore mother cell (MCC). Involved in AGAMOUS (AG) repression in leaves. The sequence is that of WUSCHEL-related homeobox 6 (WOX6) from Arabidopsis thaliana (Mouse-ear cress).